The chain runs to 160 residues: MSVVASGRVAANLQRLGIKLPAAAAPATNYVSYVCSGMQLHVSGQLPKNDVGGCMTGQLGASLTVTEGQAAARACALQVVSQMQAALGDLDRVKRVVKLNVFVNSSPSFTEQSYVANGASDLILSVFGEEVGRHARCAVGVAQLPFGAAVEVDALVELNN.

The protein resides in the cytoplasm. The polypeptide is Protein TCP17 (Trypanosoma cruzi).